The following is an 80-amino-acid chain: UPF0154 protein MGAS10270_Spy0296 (80 aa).

A helical membrane pass occupies residues 4–24 (AIWILLLIVALGVGVFGGIFI).

Belongs to the UPF0154 family.

The protein resides in the cell membrane. This is UPF0154 protein MGAS10270_Spy0296 from Streptococcus pyogenes serotype M2 (strain MGAS10270).